A 90-amino-acid chain; its full sequence is Cell division topological specificity factor (90 aa).

Residues 1–21 (MAGFWSKLFSSEEKPSSAQTA) form a disordered region. The segment covering 10–21 (SSEEKPSSAQTA) has biased composition (basic and acidic residues).

Belongs to the MinE family.

Functionally, prevents the cell division inhibition by proteins MinC and MinD at internal division sites while permitting inhibition at polar sites. This ensures cell division at the proper site by restricting the formation of a division septum at the midpoint of the long axis of the cell. This Acinetobacter baumannii (strain AB307-0294) protein is Cell division topological specificity factor.